Here is a 323-residue protein sequence, read N- to C-terminus: Beta-ketoacyl-[acyl-carrier-protein] synthase III (323 aa).

Residues Cys-113 and His-250 contribute to the active site. The tract at residues 251–255 is ACP-binding; sequence QANRR. Asn-280 is a catalytic residue.

It belongs to the thiolase-like superfamily. FabH family. In terms of assembly, homodimer.

The protein resides in the cytoplasm. The catalysed reaction is malonyl-[ACP] + acetyl-CoA + H(+) = 3-oxobutanoyl-[ACP] + CO2 + CoA. It functions in the pathway lipid metabolism; fatty acid biosynthesis. Its function is as follows. Catalyzes the condensation reaction of fatty acid synthesis by the addition to an acyl acceptor of two carbons from malonyl-ACP. Catalyzes the first condensation reaction which initiates fatty acid synthesis and may therefore play a role in governing the total rate of fatty acid production. Possesses both acetoacetyl-ACP synthase and acetyl transacylase activities. Its substrate specificity determines the biosynthesis of branched-chain and/or straight-chain of fatty acids. This Rhizobium meliloti (strain 1021) (Ensifer meliloti) protein is Beta-ketoacyl-[acyl-carrier-protein] synthase III.